Here is a 144-residue protein sequence, read N- to C-terminus: MSTFMAKAEDVERKWYVIDAADKPLGRVASEAARLLRGKHKPIFTPHVDTGDHVIIINAEKVALTGKKLTQKLYYHHSRYPGGMTLINYGTLLKTRPERAVEKAIKGMLPKNRLGEQMYRKLNVYKGEAHPHQAQKPEAWTIRD.

Belongs to the universal ribosomal protein uL13 family. As to quaternary structure, part of the 50S ribosomal subunit.

In terms of biological role, this protein is one of the early assembly proteins of the 50S ribosomal subunit, although it is not seen to bind rRNA by itself. It is important during the early stages of 50S assembly. The protein is Large ribosomal subunit protein uL13 of Heliobacterium modesticaldum (strain ATCC 51547 / Ice1).